Here is a 350-residue protein sequence, read N- to C-terminus: Protein RecA (350 aa).

Residue 67-74 (GPESSGKT) coordinates ATP.

It belongs to the RecA family.

It localises to the cytoplasm. Functionally, can catalyze the hydrolysis of ATP in the presence of single-stranded DNA, the ATP-dependent uptake of single-stranded DNA by duplex DNA, and the ATP-dependent hybridization of homologous single-stranded DNAs. It interacts with LexA causing its activation and leading to its autocatalytic cleavage. The polypeptide is Protein RecA (Mycobacterium avium (strain 104)).